The chain runs to 382 residues: Lipid-A-disaccharide synthase (382 aa).

This sequence belongs to the LpxB family.

It carries out the reaction 2-N,3-O-bis[(3R)-3-hydroxytetradecanoyl]-alpha-D-glucosaminyl 1-phosphate + UDP-2-N,3-O-bis[(3R)-3-hydroxytetradecanoyl]-alpha-D-glucosamine = lipid A disaccharide (E. coli) + UDP + H(+). The enzyme catalyses a lipid X + a UDP-2-N,3-O-bis[(3R)-3-hydroxyacyl]-alpha-D-glucosamine = a lipid A disaccharide + UDP + H(+). Its pathway is glycolipid biosynthesis; lipid IV(A) biosynthesis; lipid IV(A) from (3R)-3-hydroxytetradecanoyl-[acyl-carrier-protein] and UDP-N-acetyl-alpha-D-glucosamine: step 5/6. In terms of biological role, condensation of UDP-2,3-diacylglucosamine and 2,3-diacylglucosamine-1-phosphate to form lipid A disaccharide, a precursor of lipid A, a phosphorylated glycolipid that anchors the lipopolysaccharide to the outer membrane of the cell. In Escherichia coli O157:H7, this protein is Lipid-A-disaccharide synthase.